The primary structure comprises 196 residues: Orotate phosphoribosyltransferase (196 aa).

117-125 (EDIVTTGLS) is a 5-phospho-alpha-D-ribose 1-diphosphate binding site. Orotate contacts are provided by Thr121 and Arg149.

This sequence belongs to the purine/pyrimidine phosphoribosyltransferase family. PyrE subfamily. In terms of assembly, homodimer. The cofactor is Mg(2+).

It catalyses the reaction orotidine 5'-phosphate + diphosphate = orotate + 5-phospho-alpha-D-ribose 1-diphosphate. It participates in pyrimidine metabolism; UMP biosynthesis via de novo pathway; UMP from orotate: step 1/2. In terms of biological role, catalyzes the transfer of a ribosyl phosphate group from 5-phosphoribose 1-diphosphate to orotate, leading to the formation of orotidine monophosphate (OMP). The polypeptide is Orotate phosphoribosyltransferase (Methylorubrum populi (strain ATCC BAA-705 / NCIMB 13946 / BJ001) (Methylobacterium populi)).